Here is a 276-residue protein sequence, read N- to C-terminus: Probable ABC transporter permease protein PH1036 (276 aa).

6 helical membrane-spanning segments follow: residues 12 to 32 (IAWSIGIAWLIPFMGVLMASV), 75 to 95 (IVAIPSTIVPVIVASLAAYAF), 109 to 129 (FIVLLMALPQQMTVVPLYFLL), 137 to 157 (TFRGLIIVHSAWGLAWIIFFM), 186 to 206 (IVLPMALPGLISASILQFTWV), and 241 to 261 (GLLTAASIMVMLVPLLVYALF). Residues 70-261 (LKNSLIVAIP…LVPLLVYALF (192 aa)) form the ABC transmembrane type-1 domain.

It belongs to the binding-protein-dependent transport system permease family. MalFG subfamily.

The protein resides in the cell membrane. Probably part of a binding-protein-dependent transport system PH1036/38/39. Probably responsible for the translocation of the substrate across the membrane. This Pyrococcus horikoshii (strain ATCC 700860 / DSM 12428 / JCM 9974 / NBRC 100139 / OT-3) protein is Probable ABC transporter permease protein PH1036.